The chain runs to 1065 residues: Inversin (1065 aa).

ANK repeat units lie at residues 13–42 (SLAS…ALKD), 47–76 (FGRT…DVNK), 80–110 (SQRT…WMQK), 113–144 (EEMT…EVDT), 148–177 (NKQT…NIGI), 181–213 (EGKI…TESL), 220–250 (EGRT…NITS), 254–283 (LFRT…SGTI), 288–317 (QGAT…VKDD), 321–350 (EGRT…DIDI), 356–385 (YGGT…QVDA), 389–418 (MKHT…RVDL), 422–451 (DGHS…NPNV), 455–484 (AGRT…DPNI), 488–517 (EGRT…FPNQ), and 523–553 (ERYT…SIAA). Asn75 is modified (3-hydroxyasparagine). Positions 490–498 (RTALHWSCN) match the D-box 1 motif. One can recognise an IQ 1 domain in the interval 555 to 584 (QDIAAFKIQAVYKGYKVRKAFRDRKNLLMK). Positions 589–616 (RKDAAAKKREEENKRKEAEQQKGRRSPD) are enriched in basic and acidic residues. Disordered regions lie at residues 589–833 (RKDA…TPRN) and 847–886 (HLPQ…PLSG). Residues 627-640 (PSTQDVPSRQSRAP) are compositionally biased toward polar residues. The residue at position 661 (Ser661) is a Phosphoserine. The segment covering 677–686 (SSDLQGTNSR) has biased composition (polar residues). Composition is skewed to basic and acidic residues over residues 687 to 697 (RPNETAREHSK), 706 to 715 (RPNEGSDGSR), 723 to 736 (EKSR…ERCA), 752 to 762 (GPDEKGEDSRR), 770 to 786 (HDSH…EPKA), and 853 to 863 (EELRSGARRLE). The D-box 2 signature appears at 909 to 917 (RKELFRKKN). An IQ 2 domain is found at 916-945 (KNKAAAVIQRAWRSYQLRKHLSHLRHMKQL). A disordered region spans residues 976–999 (TTAVSKAPKSPSKGTSGTKSTKHS). Over residues 983 to 994 (PKSPSKGTSGTK) the composition is skewed to low complexity.

As to quaternary structure, binds calmodulin via its IQ domains. Interacts with APC2. Interacts with alpha-, beta-, and gamma-catenin. Interacts with N-cadherin (CDH2). Interacts with microtubules. Interacts with NPHP1. Interacts with DVL1, PRICKLE (PRICKLE1 or PRICKLE2) and Strabismus (VANGL1 or VANGL2). Interacts with IQCB1; the interaction likely requires additional interactors. Component of a complex containing at least ANKS6, INVS, NEK8 and NPHP3. ANKS6 may organize complex assembly by linking INVS and NPHP3 to NEK8 and INVS may target the complex to the proximal ciliary axoneme. May be ubiquitinated via its interaction with APC2. In terms of processing, hydroxylated at Asn-75, most probably by HIF1AN. In terms of tissue distribution, widely expressed. Strongly expressed in the primary cilia of renal tubular cells.

The protein resides in the cytoplasm. It is found in the cytoskeleton. The protein localises to the spindle. It localises to the membrane. Its subcellular location is the nucleus. The protein resides in the cell projection. It is found in the cilium. In terms of biological role, required for normal renal development and establishment of left-right axis. Probably acts as a molecular switch between different Wnt signaling pathways. Inhibits the canonical Wnt pathway by targeting cytoplasmic disheveled (DVL1) for degradation by the ubiquitin-proteasome. This suggests that it is required in renal development to oppose the repression of terminal differentiation of tubular epithelial cells by Wnt signaling. Involved in the organization of apical junctions in kidney cells together with NPHP1, NPHP4 and RPGRIP1L/NPHP8. Does not seem to be strictly required for ciliogenesis. The polypeptide is Inversin (INVS) (Homo sapiens (Human)).